The chain runs to 186 residues: Protein C (186 aa).

The segment covering 1–15 (MSKTDWNASGLSRPS) has biased composition (polar residues). Residues 1–44 (MSKTDWNASGLSRPSPSAHWPSRKLWQHGQKYQTTQDRSEPPAG) are disordered.

Belongs to the morbillivirus protein C family. In terms of assembly, interacts with the phosphoprotein (via C-terminus); this interaction allows C to associate with the ribonucleocapsid.

Its subcellular location is the host nucleus. The protein localises to the host cytoplasmic vesicle. Ribonucleocapsid-associated protein that interacts with the phosphoprotein (P), thereby increasing replication accuracy and processivity of the polymerase complex. The sequence is that of Protein C (P/V/C) from Homo sapiens (Human).